The primary structure comprises 737 residues: MTISNTAKITPELVASHGLKPDEYERILKLIGREPSLTELGIFSAMWNEHCSYKSSRIHLKGLPTKAPWVLQGPGENAGVIDIGDNQAVVFKMESHNHPSFIEPYQGATTGVGGILRDVFTMGARPIACLNALSFGAPEHPKTRRLVSGVVAGVGGYGNSFGVPTVGGQVRFHTRYDGNILVNAMAVGLADADKIFLAAASGVGMPIVYLGSKTGRDGMGGATMASAEFDADSEEKRPTVQVGDPFAEKLLLEACLEIMANDCVIAIQDMGAAGLTCSAVEMGAKGDLGVDLDLDKVPTRETGMTAYEMMLSESQERMLMVLKPEKEALAEQIFKKWGLDFAIVGYTTPTKRFVVKHGGEVKADLPIKELGDEAPLYDRPHVPSPKLPVIHAREINAPLSVPDALEKLIGTPELCSRRWVWEQYDHVILGNTVQRPGGDAAVVRIEDGPKGLALTVDVTPRYCEADPVEGGKQAVAEAYRNVTAVGGKLLAITDNLNFGNPERPEIMGQLVGCLKGISEACIALDSPIVSGNVSLYNETNGRGILPTPSIGGVGLLDDFTKSATLAFKAADEAILLIGDTHGWLGQSVYLRDVCGREEGAPPPVDLAAEKRNGDVVRGMIHAGTATAVHDISDGGLLIALAEMAIAGGIGATLDPAPDSTVPHAWWFGEDQARYVVTVKQDDLLGVMTKLKTVGVPCTQIGITGGATLSIAGERAIEVTALETAHEAWLPAYMAAKN.

His-50 is a catalytic residue. ATP contacts are provided by Tyr-53 and Lys-92. Residue Glu-94 coordinates Mg(2+). Substrate-binding positions include 95–98 (SHNH) and Arg-117. Residue His-96 is the Proton acceptor of the active site. Asp-118 is a Mg(2+) binding site. Gln-241 provides a ligand contact to substrate. Asp-269 is a binding site for Mg(2+). Residue 313-315 (ESQ) participates in substrate binding. ATP is bound by residues Asp-494 and Gly-531. Mg(2+) is bound at residue Asn-532. Ser-534 is a substrate binding site.

It belongs to the FGAMS family. In terms of assembly, monomer. Part of the FGAM synthase complex composed of 1 PurL, 1 PurQ and 2 PurS subunits.

The protein localises to the cytoplasm. The enzyme catalyses N(2)-formyl-N(1)-(5-phospho-beta-D-ribosyl)glycinamide + L-glutamine + ATP + H2O = 2-formamido-N(1)-(5-O-phospho-beta-D-ribosyl)acetamidine + L-glutamate + ADP + phosphate + H(+). Its pathway is purine metabolism; IMP biosynthesis via de novo pathway; 5-amino-1-(5-phospho-D-ribosyl)imidazole from N(2)-formyl-N(1)-(5-phospho-D-ribosyl)glycinamide: step 1/2. Its function is as follows. Part of the phosphoribosylformylglycinamidine synthase complex involved in the purines biosynthetic pathway. Catalyzes the ATP-dependent conversion of formylglycinamide ribonucleotide (FGAR) and glutamine to yield formylglycinamidine ribonucleotide (FGAM) and glutamate. The FGAM synthase complex is composed of three subunits. PurQ produces an ammonia molecule by converting glutamine to glutamate. PurL transfers the ammonia molecule to FGAR to form FGAM in an ATP-dependent manner. PurS interacts with PurQ and PurL and is thought to assist in the transfer of the ammonia molecule from PurQ to PurL. The polypeptide is Phosphoribosylformylglycinamidine synthase subunit PurL (Rhodopseudomonas palustris (strain BisA53)).